The chain runs to 401 residues: Argininosuccinate synthase (401 aa).

Residues 9 to 17 (AYSGGLDTS) and Ala-36 contribute to the ATP site. L-citrulline is bound by residues Tyr-87 and Ser-92. ATP is bound at residue Gly-117. Residues Thr-119, Asn-123, and Asp-124 each coordinate L-aspartate. Asn-123 contacts L-citrulline. Residues Arg-127, Ser-176, Ser-185, Glu-261, and Tyr-273 each coordinate L-citrulline.

It belongs to the argininosuccinate synthase family. Type 1 subfamily. As to quaternary structure, homotetramer.

It localises to the cytoplasm. It catalyses the reaction L-citrulline + L-aspartate + ATP = 2-(N(omega)-L-arginino)succinate + AMP + diphosphate + H(+). The protein operates within amino-acid biosynthesis; L-arginine biosynthesis; L-arginine from L-ornithine and carbamoyl phosphate: step 2/3. This chain is Argininosuccinate synthase, found in Syntrophobacter fumaroxidans (strain DSM 10017 / MPOB).